The sequence spans 480 residues: NADH-quinone oxidoreductase subunit N 1 (480 aa).

The next 14 membrane-spanning stretches (helical) occupy residues 12 to 32, 38 to 58, 78 to 98, 106 to 126, 128 to 148, 163 to 183, 203 to 223, 241 to 261, 271 to 291, 303 to 323, 326 to 346, 372 to 392, 396 to 416, and 449 to 469; these read LSMP…IGVF, TPTV…WLVL, FMKV…VGHA, FEFP…ISAN, LISL…VAAI, FVLG…VYGF, LGLV…ISAV, TAFF…RIVI, WQQI…FAAI, SSIG…MAGV, VILY…CILA, ATVL…AGFF, FVFV…GVLA, and LVFG…GPLG.

Belongs to the complex I subunit 2 family. In terms of assembly, NDH-1 is composed of 14 different subunits. Subunits NuoA, H, J, K, L, M, N constitute the membrane sector of the complex.

The protein localises to the cell inner membrane. It catalyses the reaction a quinone + NADH + 5 H(+)(in) = a quinol + NAD(+) + 4 H(+)(out). Functionally, NDH-1 shuttles electrons from NADH, via FMN and iron-sulfur (Fe-S) centers, to quinones in the respiratory chain. The immediate electron acceptor for the enzyme in this species is believed to be ubiquinone. Couples the redox reaction to proton translocation (for every two electrons transferred, four hydrogen ions are translocated across the cytoplasmic membrane), and thus conserves the redox energy in a proton gradient. The protein is NADH-quinone oxidoreductase subunit N 1 of Rhizobium meliloti (strain 1021) (Ensifer meliloti).